The chain runs to 521 residues: Cytochrome P450 1A1 (521 aa).

Phenylalanine 229 contacts substrate. Heme is bound at residue cysteine 463.

Belongs to the cytochrome P450 family. The cofactor is heme.

The protein localises to the endoplasmic reticulum membrane. The protein resides in the microsome membrane. It carries out the reaction an organic molecule + reduced [NADPH--hemoprotein reductase] + O2 = an alcohol + oxidized [NADPH--hemoprotein reductase] + H2O + H(+). Functionally, cytochromes P450 are a group of heme-thiolate monooxygenases. They oxidize a variety of structurally unrelated compounds, including steroids, fatty acids, and xenobiotics. This chain is Cytochrome P450 1A1 (cyp1a1), found in Sparus aurata (Gilthead sea bream).